Reading from the N-terminus, the 180-residue chain is MSRIGRMPIAIPAGVTVEVAENNKVTVKGPNGTLDRVLPAEMDIKVEGDTVVVTRPNELKRMKSLHGLTRTLIANMVTGVTTGYQKVLEINGVGYRAAKNGKELTLTLGYSHPVVMKDPEGVETILEGQNKITVKGIDKEKVGQYAAEIRDKRRPEPYKGKGIKYSDEVIRRKVGKTGKK.

This sequence belongs to the universal ribosomal protein uL6 family. In terms of assembly, part of the 50S ribosomal subunit.

This protein binds to the 23S rRNA, and is important in its secondary structure. It is located near the subunit interface in the base of the L7/L12 stalk, and near the tRNA binding site of the peptidyltransferase center. This chain is Large ribosomal subunit protein uL6, found in Lachnoclostridium phytofermentans (strain ATCC 700394 / DSM 18823 / ISDg) (Clostridium phytofermentans).